A 182-amino-acid chain; its full sequence is Transcription termination/antitermination protein NusG (182 aa).

The region spanning 130-161 (VGEVVRVNEGPFADFNGTVEEVDYEKSRLKVS) is the KOW domain.

Belongs to the NusG family.

Functionally, participates in transcription elongation, termination and antitermination. This is Transcription termination/antitermination protein NusG from Vibrio vulnificus (strain CMCP6).